Reading from the N-terminus, the 538-residue chain is Acetylcholine receptor subunit alpha-type acr-7 (538 aa).

The signal sequence occupies residues 1–27 (MMVQSIQIVLPVALFFLIVFNGFTVEG). At 28 to 250 (SKKEAQLYRD…LHLRRRTFYY (223 aa)) the chain is on the extracellular side. 2 N-linked (GlcNAc...) asparagine glycosylation sites follow: N41 and N101. 2 cysteine pairs are disulfide-bonded: C160-C174 and C229-C230. Helical transmembrane passes span 251–271 (VFNV…AFCL), 280–300 (IGLQ…LSEM), and 313–333 (VFFS…ILVL). Residues 334 to 513 (NIRYRQITNH…FAAQAVDRFC (180 aa)) lie on the Cytoplasmic side of the membrane. The chain crosses the membrane as a helical span at residues 514-534 (LIIFTIVFIICCFIFVAIPPI).

It belongs to the ligand-gated ion channel (TC 1.A.9) family. Acetylcholine receptor (TC 1.A.9.1) subfamily. Forms a homooligomeric channel blocked by alpha-bungarotoxin. The structure is probably pentameric.

The protein localises to the postsynaptic cell membrane. It localises to the cell membrane. After binding acetylcholine, the AChR responds by an extensive change in conformation that affects all subunits and leads to opening of an ion-conducting channel across the plasma membrane. The polypeptide is Acetylcholine receptor subunit alpha-type acr-7 (acr-7) (Caenorhabditis elegans).